A 79-amino-acid chain; its full sequence is Potassium channel toxin Hge-beta-KTx (79 aa).

The signal sequence occupies residues 1 to 21 (MAKSFFAAFLIIMLISSLVDG). Residues 48–79 (EYMCPVVSSFCKQHCARLGKSGQCDLLECICS) enclose the BetaSPN-type CS-alpha/beta domain. Cystine bridges form between Cys51-Cys71, Cys58-Cys76, and Cys62-Cys78.

In terms of tissue distribution, expressed by the venom gland.

The protein resides in the secreted. The full peptide presents antibacterial and cytotoxic activities. The synthetic C-terminus (AA 33-76) inhibits voltage-gated potassium channels Kv1.1/KCNA1, Kv1.2/KCNA2, and Kv1.3/KCNA3. The protein is Potassium channel toxin Hge-beta-KTx of Hoffmannihadrurus gertschi (Scorpion).